The chain runs to 514 residues: Light-independent protochlorophyllide reductase subunit B (514 aa).

Residue aspartate 36 participates in [4Fe-4S] cluster binding. Residue aspartate 300 is the Proton donor of the active site. Position 435 to 436 (glycine 435 to methionine 436) interacts with substrate.

This sequence belongs to the ChlB/BchB/BchZ family. In terms of assembly, protochlorophyllide reductase is composed of three subunits; ChlL, ChlN and ChlB. Forms a heterotetramer of two ChlB and two ChlN subunits. The cofactor is [4Fe-4S] cluster.

The protein resides in the plastid. It is found in the chloroplast. The catalysed reaction is chlorophyllide a + oxidized 2[4Fe-4S]-[ferredoxin] + 2 ADP + 2 phosphate = protochlorophyllide a + reduced 2[4Fe-4S]-[ferredoxin] + 2 ATP + 2 H2O. It participates in porphyrin-containing compound metabolism; chlorophyll biosynthesis (light-independent). Its function is as follows. Component of the dark-operative protochlorophyllide reductase (DPOR) that uses Mg-ATP and reduced ferredoxin to reduce ring D of protochlorophyllide (Pchlide) to form chlorophyllide a (Chlide). This reaction is light-independent. The NB-protein (ChlN-ChlB) is the catalytic component of the complex. The protein is Light-independent protochlorophyllide reductase subunit B of Pleurastrum terricola (Filamentous green alga).